A 132-amino-acid chain; its full sequence is ATP synthase epsilon chain (132 aa).

Belongs to the ATPase epsilon chain family. In terms of assembly, F-type ATPases have 2 components, CF(1) - the catalytic core - and CF(0) - the membrane proton channel. CF(1) has five subunits: alpha(3), beta(3), gamma(1), delta(1), epsilon(1). CF(0) has three main subunits: a, b and c.

It localises to the cell inner membrane. Its function is as follows. Produces ATP from ADP in the presence of a proton gradient across the membrane. This chain is ATP synthase epsilon chain, found in Parvibaculum lavamentivorans (strain DS-1 / DSM 13023 / NCIMB 13966).